The primary structure comprises 286 residues: Master replication protein (286 aa).

A CRESS-DNA virus Rep endonuclease domain is found at 2–96 (ARQVICWCFT…VEGPWEFGEF (95 aa)). Positions 9-12 (CFTL) match the RCR-1 motif. Glu-33 and His-41 together coordinate a divalent metal cation. An RCR-2 motif is present at residues 41 to 43 (HYQ). The short motif at 50 to 70 (KRTSLVQMKKLLPGAHLEKRR) is the Nuclear localization signal element. Tyr-79 functions as the For DNA cleavage activity in the catalytic mechanism. The RCR-3 signature appears at 79–82 (YAMK). Asp-84 contributes to the a divalent metal cation binding site. The short motif at 96–102 (FKEVLED) is the Nuclear localization signal element. 180 to 188 (GPQGGEGKT) serves as a coordination point for ATP.

The protein belongs to the nanoviridea/circoviridae replication-associated protein family. As to quaternary structure, homooligomer (Potential). Rep binds to repeated DNA motifs (iterons). Requires Mg(2+) as cofactor. Mn(2+) serves as cofactor.

It localises to the host nucleus. It catalyses the reaction ATP + H2O = ADP + phosphate + H(+). Functionally, essential for the replication of all genomic viral ssDNA (trans-replication). The closed circular ssDNA genome is first converted to a superhelical dsDNA. Rep binds a specific hairpin at the genome origin of replication. Introduces an endonucleolytic nick within the conserved sequence 5'-A[GT]TATTAC-3' in the intergenic region of the genome, thereby initiating the rolling circle replication (RCR). Following cleavage, binds covalently to the 5'-phosphate of DNA as a tyrosyl ester. The cleavage gives rise to a free 3'-OH that serves as a primer for the cellular DNA polymerase. The polymerase synthesizes the (+) strand DNA by rolling circle mechanism. After one round of replication, a Rep-catalyzed nucleotidyl transfer reaction releases a circular single-stranded virus genome, thereby terminating the replication. Displays origin-specific DNA cleavage, nucleotidyl transferase, ATPase and helicase activities. This Subterranean clover stunt virus (strain F) (SCSV) protein is Master replication protein (DNA-R).